The following is a 2036-amino-acid chain: Ral GTPase-activating protein subunit alpha-1 (2036 aa).

2 disordered regions span residues 343 to 384 and 476 to 497; these read LVSR…SSLC and EEGE…RNSS. The span at 345 to 365 shows a compositional bias: basic and acidic residues; it reads SREESKNDNADKTDRTTEPEQ. 2 stretches are compositionally biased toward polar residues: residues 366 to 384 and 486 to 497; these read SHSN…SSLC and GTNTADHVRNSS. Phosphoserine occurs at positions 711 and 721. The disordered stretch occupies residues 715-753; it reads SFSRGWSRDQPGQAPMRQRSATTTGSPGTEKARSIVRQK. Residue Thr754 is modified to Phosphothreonine. Ser773 carries the phosphoserine modification. Phosphothreonine is present on Thr778. Ser797, Ser860, Ser861, and Ser864 each carry phosphoserine. Disordered stretches follow at residues 849-910 and 982-1009; these read SGNA…SDSH and TITG…STLN. Residues 850-863 show a composition bias toward polar residues; sequence GNASTMTRRGSSPG. Over residues 895-910 the composition is skewed to low complexity; sequence SPASAGSSDLISSDSH. Polar residues predominate over residues 983-1009; that stretch reads ITGSESASPVHSPLGSRSQTPSPSTLN. 4 positions are modified to phosphoserine: Ser986, Ser990, Ser994, and Ser1000. Thr1002 is subject to Phosphothreonine. A phosphoserine mark is found at Ser1004 and Ser1478. A minimal domain that binds to TCF3/E12 region spans residues 1327–2035; the sequence is FTNKTVAHVA…PYHHLPSDAD (709 aa). The stretch at 1716-1744 forms a coiled coil; sequence KQENDVINAILKQHTEEKEFVEKHFNDLN. The Rap-GAP domain maps to 1796–2004; sequence LRNLDSRQCR…EERARYLQTI (209 aa).

Component of the heterodimeric RalGAP1 complex with RALGAPB. Heterodimerization is required for activity. Interacts with the HLH region of TCF3/isoform E12. In terms of tissue distribution, widely expressed.

The protein resides in the cytoplasm. It localises to the nucleus. Its function is as follows. Catalytic subunit of the heterodimeric RalGAP1 complex which acts as a GTPase activator for the Ras-like small GTPases RALA and RALB. The sequence is that of Ral GTPase-activating protein subunit alpha-1 (RALGAPA1) from Homo sapiens (Human).